The following is a 141-amino-acid chain: MAESLICNSTQSRVSSVLNRDVKQFGKKFMFDSNEETCWNSDQGESQWVLLEFPQHVKVSEVRLQFQGGFSGKSCKLEGSSKDENLRHILNFYPEDNNSLQSFPIPDAPLVQKLKIVFENSTDFFGRIIVYTLDILGEKDL.

This sequence belongs to the NR2C2AP family.

It is found in the nucleus. In terms of biological role, may act as a repressor of nr2c2-mediated transactivation by suppressing the binding between nr2c2 and its response element in target genes. This Danio rerio (Zebrafish) protein is Nuclear receptor 2C2-associated protein (nr2c2ap).